Reading from the N-terminus, the 539-residue chain is uncharacterized protein (539 aa).

Disordered regions lie at residues 179 to 203 (SDEL…HSHG) and 433 to 459 (AQAS…HRDE). Acidic residues predominate over residues 182 to 192 (LLPDTGEDSDE). Low complexity predominate over residues 433–442 (AQASARAQAR). Residues 443–455 (AARRGRSAAKARG) show a composition bias toward basic residues.

The protein belongs to the mycobacterial PPE family.

The protein resides in the secreted. This is an uncharacterized protein from Mycobacterium tuberculosis (strain CDC 1551 / Oshkosh).